A 524-amino-acid polypeptide reads, in one-letter code: Probable inorganic phosphate transporter 1-2 (524 aa).

At 1–24 (MAEQQLGVLKALDVAKTQLYHFTA) the chain is on the cytoplasmic side. A helical transmembrane segment spans residues 25–45 (IVIAGMGFFTDAYDLFCVSLV). Residues 46–70 (TKLLGRIYYFNPESAKPGSLPPHVA) lie on the Extracellular side of the membrane. The chain crosses the membrane as a helical span at residues 71–91 (AAVNGVALCGTLSGQLFFGWL). Topologically, residues 92 to 99 (GDKLGRKK) are cytoplasmic. A helical membrane pass occupies residues 100–120 (VYGLTLIMMILCSVASGLSFG). Over 121-131 (NEAKGVMTTLC) the chain is Extracellular. A helical transmembrane segment spans residues 132 to 152 (FFRFWLGFGIGGDYPLSATIM). Topologically, residues 153-161 (SEYANKKTR) are cytoplasmic. Residues 162–182 (GAFIAAVFAMQGVGILAGGFV) form a helical membrane-spanning segment. The Extracellular portion of the chain corresponds to 183–211 (ALAVSSIFDKKFPAPTYAVNRALSTPPQV). Residues 212–232 (DYIWRIIVMFGALPAALTYYW) form a helical membrane-spanning segment. Residues 233-292 (RMKMPETARYTALVAKNIKQATADMSKVLQTDIELEERVEDDVKDPRQNYGLFSKEFLRR) lie on the Cytoplasmic side of the membrane. The helical transmembrane segment at 293-313 (HGLHLLGTTSTWFLLDIAFYS) threads the bilayer. At 314-348 (QNLFQKDIFSAIGWIPKAATMNATHEVFRIARAQT) the chain is on the extracellular side. The chain crosses the membrane as a helical span at residues 349–369 (LIALCSTVPGYWFTVAFIDTI). Over 370–371 (GR) the chain is Cytoplasmic. A helical membrane pass occupies residues 372 to 392 (FKIQLNGFFMMTVFMFAIAFP). The Extracellular segment spans residues 393–402 (YNHWIKPENR). The chain crosses the membrane as a helical span at residues 403 to 423 (IGFVVMYSLTFFFANFGPNAT). Residues 424–441 (TFIVPAEIFPARLRSTCH) are Cytoplasmic-facing. Residues 442–462 (GISAAAGKAGAIIGAFGFLYA) form a helical membrane-spanning segment. Residues 463-484 (AQNQDKAKVDAGYPPGIGVKNS) are Extracellular-facing. A helical membrane pass occupies residues 485-505 (LIVLGVLNFIGMLFTFLVPEP). Residues 506–524 (KGKSLEELSGEAEVSHDEK) lie on the Cytoplasmic side of the membrane.

The protein belongs to the major facilitator superfamily. Phosphate:H(+) symporter (TC 2.A.1.9) family. As to expression, root specific, especially in trichoblasts. In mature plants, localized in root cortical cells and young lateral roots.

It is found in the membrane. In terms of biological role, high-affinity transporter for external inorganic phosphate. In Arabidopsis thaliana (Mouse-ear cress), this protein is Probable inorganic phosphate transporter 1-2 (PHT1-2).